A 327-amino-acid polypeptide reads, in one-letter code: GTP 3',8-cyclase (327 aa).

The region spanning 21–233 (SYGRRIRKLR…AKIQQKYSLK (213 aa)) is the Radical SAM core domain. Arg-30 contacts GTP. [4Fe-4S] cluster contacts are provided by Cys-37 and Cys-41. Residue Tyr-43 coordinates S-adenosyl-L-methionine. Cys-44 is a binding site for [4Fe-4S] cluster. GTP is bound at residue Arg-79. Gly-83 is a binding site for S-adenosyl-L-methionine. Position 109 (Thr-109) interacts with GTP. Residue Ser-133 participates in S-adenosyl-L-methionine binding. Residue Lys-169 coordinates GTP. Met-203 contributes to the S-adenosyl-L-methionine binding site. Cys-265 and Cys-268 together coordinate [4Fe-4S] cluster. Residue 270-272 (RWR) participates in GTP binding. Cys-282 serves as a coordination point for [4Fe-4S] cluster.

It belongs to the radical SAM superfamily. MoaA family. Monomer and homodimer. It depends on [4Fe-4S] cluster as a cofactor.

The catalysed reaction is GTP + AH2 + S-adenosyl-L-methionine = (8S)-3',8-cyclo-7,8-dihydroguanosine 5'-triphosphate + 5'-deoxyadenosine + L-methionine + A + H(+). Its pathway is cofactor biosynthesis; molybdopterin biosynthesis. In terms of biological role, catalyzes the cyclization of GTP to (8S)-3',8-cyclo-7,8-dihydroguanosine 5'-triphosphate. The protein is GTP 3',8-cyclase of Synechocystis sp. (strain ATCC 27184 / PCC 6803 / Kazusa).